The chain runs to 855 residues: Homeobox-leucine zipper protein HOX33 (855 aa).

The disordered stretch occupies residues 1–21 (MAAAAVGGRGERLSSSSPTAA). Positions 26–89 (DAGKYVRYTP…NRRCREKQRK (64 aa)) form a DNA-binding region, homeobox. A coiled-coil region spans residues 84–126 (REKQRKEASRLQTVNRKLNAMNKLLMEENDRLQKQVSRLVYEN). The START domain occupies 168–390 (DANNPAGLLA…LRHIRQIAHE (223 aa)).

This sequence belongs to the HD-ZIP homeobox family. Class III subfamily. Expressed in seedlings, roots, stems, leaf sheaths and blades and panicles.

The protein localises to the nucleus. Its function is as follows. Probable transcription factor. This chain is Homeobox-leucine zipper protein HOX33 (HOX33), found in Oryza sativa subsp. indica (Rice).